Here is a 176-residue protein sequence, read N- to C-terminus: Ribosome maturation factor RimM (176 aa).

Residues 96–176 (PEDEFYWRDL…QILVDWDPDF (81 aa)) enclose the PRC barrel domain.

It belongs to the RimM family. In terms of assembly, binds ribosomal protein uS19.

It is found in the cytoplasm. An accessory protein needed during the final step in the assembly of 30S ribosomal subunit, possibly for assembly of the head region. Essential for efficient processing of 16S rRNA. May be needed both before and after RbfA during the maturation of 16S rRNA. It has affinity for free ribosomal 30S subunits but not for 70S ribosomes. The polypeptide is Ribosome maturation factor RimM (Shewanella woodyi (strain ATCC 51908 / MS32)).